A 793-amino-acid polypeptide reads, in one-letter code: DNA mismatch repair protein MutS (793 aa).

An ATP-binding site is contributed by Gly-589–Ser-596.

It belongs to the DNA mismatch repair MutS family.

In terms of biological role, this protein is involved in the repair of mismatches in DNA. It is possible that it carries out the mismatch recognition step. This protein has a weak ATPase activity. The polypeptide is DNA mismatch repair protein MutS (Thermotoga sp. (strain RQ2)).